Reading from the N-terminus, the 319-residue chain is Alpha-hemolysin (319 aa).

The first 26 residues, 1 to 26 (MKTRIVSSVTTTLLLGSILMNPVAGA), serve as a signal peptide directing secretion.

The protein belongs to the aerolysin family. Self-assembles to first form a non-lytic oligomeric intermediate, and then, a mushroom-shaped homoheptamer structure of 100 Angstroms in length and up to 100 Angstroms in diameter. Interacts with human ADAM10; this interaction is required for toxin pore formation, disruption of focal adhesions, and hly-mediated cytotoxicity.

The protein resides in the secreted. Alpha-toxin binds to the membrane of eukaryotic cells (particularly red blood cells, RBC) forming pores, resulting in hemolysis, with the release of low-molecular weight molecules leading to eventual osmotic RBC lysis. Human RBCs bind much less alpha-toxin than do rabbit RBCs. Heptamer oligomerization and pore formation is required for lytic activity. In Staphylococcus aureus, this protein is Alpha-hemolysin (hly).